Here is a 1099-residue protein sequence, read N- to C-terminus: R3H domain-containing protein 1 (1099 aa).

Residues 111 to 146 (SFEKEEKPSKDEAEKEKASDKLPRKMLSRDSSQEYT) are disordered. Positions 112 to 142 (FEKEEKPSKDEAEKEKASDKLPRKMLSRDSS) are enriched in basic and acidic residues. The 64-residue stretch at 168–231 (RMMLLKLEQE…SVIVNKTSNT (64 aa)) folds into the R3H domain. Residues S187 and S262 each carry the phosphoserine modification. The region spanning 232–302 (RIPDQKFNEH…ARDRIFSQDS (71 aa)) is the SUZ domain. The segment at 267–287 (DNQMRIRLKDDRRSKSIEERE) is disordered. S302 carries the post-translational modification Phosphoserine. The tract at residues 331 to 370 (RVNKDASGRSTNSHQSSTENELKYSEPRPWSSTDSDSSLR) is disordered. Composition is skewed to polar residues over residues 338 to 349 (GRSTNSHQSSTE) and 360 to 370 (WSSTDSDSSLR). Phosphoserine occurs at positions 380, 381, and 393. Disordered regions lie at residues 387-439 (VLTR…SSHG), 490-537 (QTGQ…AANH), 583-625 (YIMT…HPVS), and 797-825 (EQVQFPRTTSPCSSQQLQGHQCTAGPPPP). Low complexity predominate over residues 391–422 (GDSSGSSKSIGRLSKTGSESSGSVGSSTGSLS). Pro residues-rich tracts occupy residues 519-532 (PGPPQPPLPAPPQQ) and 588-611 (APPPHPPPPPPPPPPPPPLPPGQP). Over residues 797 to 817 (EQVQFPRTTSPCSSQQLQGHQ) the composition is skewed to polar residues. Asymmetric dimethylarginine; alternate is present on R929. R929 is modified (omega-N-methylarginine; alternate). Positions 941–977 (PPAVLHGHIPNQQGQPGSRHGNRGRRQAKKAASTDLG) are disordered. The span at 960–969 (HGNRGRRQAK) shows a compositional bias: basic residues. S973 carries the phosphoserine modification.

In Homo sapiens (Human), this protein is R3H domain-containing protein 1 (R3HDM1).